We begin with the raw amino-acid sequence, 407 residues long: Transcriptional regulator UL34 (407 aa).

2 disordered regions span residues 268-330 (AAGP…EELF) and 388-407 (SPSVTPALTPVTSPITPLCI). Residues 273–286 (EADENNDEGEEDDD) show a composition bias toward acidic residues. Residues 287–301 (ELRHSDPAPLHESKK) show a composition bias toward basic and acidic residues. Over residues 302-312 (PRNARRPRTRV) the composition is skewed to basic residues.

The protein belongs to the HHV-5 UL34 protein family.

It is found in the host nucleus. Acts as a transcriptional repressor of the US3 gene expression through a specific DNA sequence named the transcriptional repressive element (tre). This Human cytomegalovirus (strain Towne) (HHV-5) protein is Transcriptional regulator UL34 (UL34).